Reading from the N-terminus, the 692-residue chain is Proprotein convertase subtilisin/kexin type 9 (692 aa).

The first 30 residues, Met1–Ala30, serve as a signal peptide directing secretion. Positions Gln31–Gln152 are excised as a propeptide. At Tyr38 the chain carries Sulfotyrosine. Ser47 is modified (phosphoserine). In terms of domain architecture, Inhibitor I9 spans Thr77–Val149. The 290-residue stretch at Pro155–Leu444 folds into the Peptidase S8 domain. Catalysis depends on charge relay system residues Asp186 and His226. 2 disulfides stabilise this stretch: Cys223/Cys255 and Cys323/Cys358. Ser386 acts as the Charge relay system in catalysis. The tract at residues Arg450–Gln692 is C-terminal domain. Disulfide bonds link Cys457/Cys527, Cys477/Cys526, and Cys486/Cys509. N-linked (GlcNAc...) asparagine glycosylation occurs at Asn533. Disulfide bonds link Cys534/Cys601, Cys552/Cys600, Cys562/Cys588, Cys608/Cys679, Cys626/Cys678, and Cys635/Cys654. Residue Ser688 is modified to Phosphoserine.

This sequence belongs to the peptidase S8 family. Monomer. Can self-associate to form dimers and higher multimers which may have increased LDLR degrading activity. The precursor protein but not the mature protein may form multimers. Interacts with APOB, VLDLR, LRP8/APOER2 and BACE1. The full-length immature form (pro-PCSK9) interacts with SCNN1A, SCNN1B and SCNN1G. The pro-PCSK9 form (via C-terminal domain) interacts with LDLR. Interacts (via the C-terminal domain) with ANXA2 (via repeat Annexin 1); the interaction inhibits the degradation of LDLR. It depends on Ca(2+) as a cofactor. Post-translationally, cleavage by furin and PCSK5 generates a truncated inactive protein that is unable to induce LDLR degradation. In terms of processing, undergoes autocatalytic cleavage in the endoplasmic reticulum to release the propeptide from the N-terminus and the cleavage of the propeptide is strictly required for its maturation and activation. The cleaved propeptide however remains associated with the catalytic domain through non-covalent interactions, preventing potential substrates from accessing its active site. As a result, it is secreted from cells as a propeptide-containing, enzymatically inactive protein. Phosphorylation protects the propeptide against proteolysis.

Its subcellular location is the cytoplasm. The protein resides in the secreted. It is found in the endosome. It localises to the lysosome. The protein localises to the cell surface. Its subcellular location is the endoplasmic reticulum. The protein resides in the golgi apparatus. With respect to regulation, its proteolytic activity is autoinhibited by the non-covalent binding of the propeptide to the catalytic domain. Inhibited by EGTA. Crucial player in the regulation of plasma cholesterol homeostasis. Binds to low-density lipid receptor family members: low density lipoprotein receptor (LDLR), very low density lipoprotein receptor (VLDLR), apolipoprotein E receptor (LRP1/APOER) and apolipoprotein receptor 2 (LRP8/APOER2), and promotes their degradation in intracellular acidic compartments. Acts via a non-proteolytic mechanism to enhance the degradation of the hepatic LDLR through a clathrin LDLRAP1/ARH-mediated pathway. May prevent the recycling of LDLR from endosomes to the cell surface or direct it to lysosomes for degradation. Can induce ubiquitination of LDLR leading to its subsequent degradation. Inhibits intracellular degradation of APOB via the autophagosome/lysosome pathway in a LDLR-independent manner. Involved in the disposal of non-acetylated intermediates of BACE1 in the early secretory pathway. Inhibits epithelial Na(+) channel (ENaC)-mediated Na(+) absorption by reducing ENaC surface expression primarily by increasing its proteasomal degradation. Regulates neuronal apoptosis via modulation of LRP8/APOER2 levels and related anti-apoptotic signaling pathways. The polypeptide is Proprotein convertase subtilisin/kexin type 9 (PCSK9) (Colobus guereza (Mantled guereza)).